Here is a 330-residue protein sequence, read N- to C-terminus: Molybdate/tungstate import ATP-binding protein WtpC (330 aa).

The 230-residue stretch at 3–232 folds into the ABC transporter domain; it reads LMVEGISKDY…PASEEVAKFL (230 aa). 34–41 provides a ligand contact to ATP; sequence GPSGAGKT.

The protein belongs to the ABC transporter superfamily. Sulfate/tungstate importer (TC 3.A.1.6) family. In terms of assembly, the complex is composed of two ATP-binding proteins (WtpC), two transmembrane proteins (WtpB) and a solute-binding protein (WtpA).

The protein localises to the cell membrane. It catalyses the reaction tungstate(in) + ATP + H2O = tungstate(out) + ADP + phosphate + H(+). Functionally, part of the ABC transporter complex WtpABC involved in molybdate/tungstate import. Responsible for energy coupling to the transport system. This Thermococcus kodakarensis (strain ATCC BAA-918 / JCM 12380 / KOD1) (Pyrococcus kodakaraensis (strain KOD1)) protein is Molybdate/tungstate import ATP-binding protein WtpC (wtpC).